The primary structure comprises 593 residues: Isocitrate dehydrogenase kinase/phosphatase (593 aa).

Residues 324–330 (APGIRGL) and lysine 345 each bind ATP. The active site involves aspartate 380.

It belongs to the AceK family.

Its subcellular location is the cytoplasm. It carries out the reaction L-seryl-[isocitrate dehydrogenase] + ATP = O-phospho-L-seryl-[isocitrate dehydrogenase] + ADP + H(+). Bifunctional enzyme which can phosphorylate or dephosphorylate isocitrate dehydrogenase (IDH) on a specific serine residue. This is a regulatory mechanism which enables bacteria to bypass the Krebs cycle via the glyoxylate shunt in response to the source of carbon. When bacteria are grown on glucose, IDH is fully active and unphosphorylated, but when grown on acetate or ethanol, the activity of IDH declines drastically concomitant with its phosphorylation. The chain is Isocitrate dehydrogenase kinase/phosphatase from Dechloromonas aromatica (strain RCB).